A 248-amino-acid polypeptide reads, in one-letter code: Triosephosphate isomerase (248 aa).

The substrate site is built by N10 and K12. H95 serves as the catalytic Electrophile. The Proton acceptor role is filled by E165.

This sequence belongs to the triosephosphate isomerase family. As to quaternary structure, homodimer.

The catalysed reaction is D-glyceraldehyde 3-phosphate = dihydroxyacetone phosphate. It participates in carbohydrate biosynthesis; gluconeogenesis. It functions in the pathway carbohydrate degradation; glycolysis; D-glyceraldehyde 3-phosphate from glycerone phosphate: step 1/1. The sequence is that of Triosephosphate isomerase (TPI1) from Zygosaccharomyces bailii.